The following is a 292-amino-acid chain: Aquaporin-3 (292 aa).

The Cytoplasmic segment spans residues 1 to 24 (MGRQKELVNRCGEMLHIRYRLLRQ). Residues 25-42 (ALAECLGTLILVMFGCGS) traverse the membrane as a helical segment. Residues 43 to 56 (VAQVVLSRGTHGGF) are Extracellular-facing. The helical transmembrane segment at 57–74 (LTINLAFGFAVTLGILIA) threads the bilayer. Residues 75-78 (GQVS) lie on the Cytoplasmic side of the membrane. Residues 79-92 (GAHLNPAVTFAMCF) constitute an intramembrane region (discontinuously helical). Residues 83–85 (NPA) carry the NPA 1 motif. The Cytoplasmic segment spans residues 93-100 (LAREPWIK). The helical transmembrane segment at 101–121 (LPVYTLAQTLGAFLGAGIIFG) threads the bilayer. Residues 122 to 159 (LYYDAIWAFANNQLIVSGPNGTAGIFATYPSGHLDMVN) are Extracellular-facing. An N-linked (GlcNAc...) asparagine glycan is attached at Asn-141. The helical transmembrane segment at 160–177 (GFFDQFIGTASLIVCVLA) threads the bilayer. Topologically, residues 178-189 (IVDPYNNPVPRG) are cytoplasmic. Residues 190–206 (LEAFTVGLVVLVIGTSM) form a helical membrane-spanning segment. The Extracellular segment spans residues 207–210 (GFNS). The segment at residues 211–224 (GYAVNPARDFGPRL) is an intramembrane region (discontinuously helical). The NPA 2 signature appears at 215–217 (NPA). At 225–242 (FTAIAGWGSEVFTTGRHW) the chain is on the extracellular side. The helical transmembrane segment at 243–264 (WWVPIVSPLLGSIAGVFVYQLM) threads the bilayer. The Cytoplasmic portion of the chain corresponds to 265–292 (IGCHLEPPPPSTDEENVKLSHVKHKEQM).

It belongs to the MIP/aquaporin (TC 1.A.8) family. In terms of assembly, homotetramer; each monomer provides an independent glycerol/water pore. Could also exist in other oligomeric states.

The protein resides in the cell membrane. It localises to the basolateral cell membrane. The catalysed reaction is glycerol(in) = glycerol(out). The enzyme catalyses H2O(in) = H2O(out). It carries out the reaction urea(in) = urea(out). It catalyses the reaction H2O2(out) = H2O2(in). Aquaglyceroporins form homotetrameric transmembrane channels, with each monomer independently mediating glycerol and water transport across the plasma membrane along their osmotic gradient. Could also be permeable to urea. Also participates in cell permeability to H2O2 and H2O2-mediated signaling. In skin, transports glycerol to the epidermis and stratum corneum, where it maintains hydration, elasticity, and supports lipid biosynthesis for barrier repair. In kidney, contributes to the reabsorption of water, helping the body maintain proper fluid balance. The sequence is that of Aquaporin-3 from Bos taurus (Bovine).